The chain runs to 261 residues: uncharacterized protein (261 aa).

Residues Thr-20–Gln-34 show a composition bias toward polar residues. The disordered stretch occupies residues Thr-20 to Gly-55. Positions Ser-35 to Ser-51 are enriched in low complexity. A run of 3 helical transmembrane segments spans residues Leu-113–Leu-133, Leu-183–Phe-200, and Ile-204–Val-226.

Belongs to the TVP23 family.

Its subcellular location is the membrane. This is an uncharacterized protein from Dictyostelium discoideum (Social amoeba).